A 330-amino-acid chain; its full sequence is Phosphate acyltransferase (330 aa).

It belongs to the PlsX family. In terms of assembly, homodimer. Probably interacts with PlsY.

It localises to the cytoplasm. The enzyme catalyses a fatty acyl-[ACP] + phosphate = an acyl phosphate + holo-[ACP]. Its pathway is lipid metabolism; phospholipid metabolism. Catalyzes the reversible formation of acyl-phosphate (acyl-PO(4)) from acyl-[acyl-carrier-protein] (acyl-ACP). This enzyme utilizes acyl-ACP as fatty acyl donor, but not acyl-CoA. The protein is Phosphate acyltransferase of Streptococcus pneumoniae (strain ATCC 700669 / Spain 23F-1).